Here is a 503-residue protein sequence, read N- to C-terminus: uncharacterized protein (503 aa).

12 helical membrane-spanning segments follow: residues 20-40 (FIAF…VLTM), 43-63 (LGPF…GVML), 106-126 (VSLT…LSFA), 138-158 (LIGL…ISLF), 166-186 (AILF…ILGI), 215-235 (VIST…LTAI), 249-269 (LLMF…ISGI), 301-321 (YLGI…SLAS), 359-379 (VWAS…VPFL), 405-425 (LAVL…FMIL), 443-463 (GVSF…ITAW), and 468-488 (TFKL…FIHS).

The protein to M.genitalium MG225.

It is found in the cell membrane. This is an uncharacterized protein from Mycoplasma pneumoniae (strain ATCC 29342 / M129 / Subtype 1) (Mycoplasmoides pneumoniae).